Reading from the N-terminus, the 692-residue chain is Centrosomal protein of 83 kDa (692 aa).

Coiled-coil stretches lie at residues 32 to 625 and 656 to 689; these read RCEH…SLIL and HLQEEQHQRELSLLRKRLEELETTQRKQLEELGS. Ser-689 carries the phosphoserine modification.

It belongs to the CEP83 family. In terms of assembly, interacts with CEP164 and IFT20.

The protein localises to the cytoplasm. Its subcellular location is the cytoskeleton. It localises to the microtubule organizing center. The protein resides in the centrosome. It is found in the centriole. Its function is as follows. Component of the distal appendage region of the centriole involved in the initiation of primary cilium assembly. May collaborate with IFT20 in the trafficking of ciliary membrane proteins from the Golgi complex to the cilium during the initiation of primary cilium assembly. The protein is Centrosomal protein of 83 kDa (Cep83) of Mus musculus (Mouse).